The following is a 136-amino-acid chain: MALQVRVITPDKIVWDGDVEEAILPSTSGQLGILPSHAPLLTNLDIGVMRVRLDKDWKSLVVMGGIAEVEQDILQVLVNSAEIGDDITKEDAQADFSEAQSRLEEANKGSDRREQIKASQAYKRARARLQAAGGLV.

Residues 95–115 (DFSEAQSRLEEANKGSDRREQ) form a disordered region. Positions 101–115 (SRLEEANKGSDRREQ) are enriched in basic and acidic residues.

This sequence belongs to the ATPase epsilon chain family. As to quaternary structure, F-type ATPases have 2 components, CF(1) - the catalytic core - and CF(0) - the membrane proton channel. CF(1) has five subunits: alpha(3), beta(3), gamma(1), delta(1), epsilon(1). CF(0) has three main subunits: a, b and c.

The protein resides in the cellular thylakoid membrane. In terms of biological role, produces ATP from ADP in the presence of a proton gradient across the membrane. The protein is ATP synthase epsilon chain of Rippkaea orientalis (strain PCC 8801 / RF-1) (Cyanothece sp. (strain PCC 8801)).